Consider the following 148-residue polypeptide: Large ribosomal subunit protein bL9 (148 aa).

Belongs to the bacterial ribosomal protein bL9 family.

In terms of biological role, binds to the 23S rRNA. The chain is Large ribosomal subunit protein bL9 from Methylobacillus flagellatus (strain ATCC 51484 / DSM 6875 / VKM B-1610 / KT).